A 250-amino-acid chain; its full sequence is Transcriptional activator protein ExpR (250 aa).

Residues 173 to 238 (KSQEADLFSQ…HAIRLGVEMN (66 aa)) form the HTH luxR-type domain. The H-T-H motif DNA-binding region spans 197–216 (YQEIALILGITTSTVKFHIG).

Belongs to the autoinducer-regulated transcriptional regulatory protein family.

Its function is as follows. Functions as an OHLL responsive transcriptional regulator that acts in virulence (soft rot disease) through the activation of genes for plant tissue macerating enzymes. This chain is Transcriptional activator protein ExpR (expR), found in Dickeya dadantii (strain 3937) (Erwinia chrysanthemi (strain 3937)).